A 423-amino-acid polypeptide reads, in one-letter code: Imidazolonepropionase (423 aa).

Fe(3+) is bound by residues histidine 78 and histidine 80. Positions 78 and 80 each coordinate Zn(2+). 4-imidazolone-5-propanoate contacts are provided by arginine 87, tyrosine 150, and histidine 183. An N-formimidoyl-L-glutamate-binding site is contributed by tyrosine 150. Fe(3+) is bound at residue histidine 247. Histidine 247 lines the Zn(2+) pocket. Glutamate 250 contacts 4-imidazolone-5-propanoate. A Fe(3+)-binding site is contributed by aspartate 322. Zn(2+) is bound at residue aspartate 322. Positions 324 and 326 each coordinate N-formimidoyl-L-glutamate. Serine 327 contributes to the 4-imidazolone-5-propanoate binding site.

Belongs to the metallo-dependent hydrolases superfamily. HutI family. Requires Zn(2+) as cofactor. The cofactor is Fe(3+).

It is found in the cytoplasm. It catalyses the reaction 4-imidazolone-5-propanoate + H2O = N-formimidoyl-L-glutamate. It participates in amino-acid degradation; L-histidine degradation into L-glutamate; N-formimidoyl-L-glutamate from L-histidine: step 3/3. Catalyzes the hydrolytic cleavage of the carbon-nitrogen bond in imidazolone-5-propanoate to yield N-formimidoyl-L-glutamate. It is the third step in the universal histidine degradation pathway. In Bacillus cereus (strain ATCC 14579 / DSM 31 / CCUG 7414 / JCM 2152 / NBRC 15305 / NCIMB 9373 / NCTC 2599 / NRRL B-3711), this protein is Imidazolonepropionase.